A 541-amino-acid polypeptide reads, in one-letter code: Arginine--tRNA ligase (541 aa).

Residues 119–129 carry the 'HIGH' region motif; that stretch reads ANPTGPLHIGH.

This sequence belongs to the class-I aminoacyl-tRNA synthetase family. As to quaternary structure, monomer.

It is found in the cytoplasm. The catalysed reaction is tRNA(Arg) + L-arginine + ATP = L-arginyl-tRNA(Arg) + AMP + diphosphate. This chain is Arginine--tRNA ligase, found in Helicobacter acinonychis (strain Sheeba).